Consider the following 736-residue polypeptide: Myosin-7 (736 aa).

The region spanning N1–D342 is the Myosin motor domain. The tract at residues L219 to E241 is actin-binding. Residues L345–S374 form the IQ domain. The stretch at L403–Q736 forms a coiled coil. A Phosphoserine modification is found at S701. A disordered region spans residues E716 to Q736. Positions M727–Q736 are enriched in basic and acidic residues.

The protein belongs to the TRAFAC class myosin-kinesin ATPase superfamily. Myosin family. As to quaternary structure, muscle myosin is a hexameric protein that consists of 2 heavy chain subunits (MHC), 2 alkali light chain subunits (MLC) and 2 regulatory light chain subunits (MLC-2). Interacts with ECPAS. Interacts (via C-terminus) with LRRC39.

Its subcellular location is the cytoplasm. The protein resides in the myofibril. It localises to the sarcomere. Functionally, myosins are actin-based motor molecules with ATPase activity essential for muscle contraction. Forms regular bipolar thick filaments that, together with actin thin filaments, constitute the fundamental contractile unit of skeletal and cardiac muscle. This is Myosin-7 (MYH7) from Oryctolagus cuniculus (Rabbit).